The following is a 382-amino-acid chain: ATP phosphoribosyltransferase regulatory subunit (382 aa).

The protein belongs to the class-II aminoacyl-tRNA synthetase family. HisZ subfamily. In terms of assembly, heteromultimer composed of HisG and HisZ subunits.

Its subcellular location is the cytoplasm. Its pathway is amino-acid biosynthesis; L-histidine biosynthesis; L-histidine from 5-phospho-alpha-D-ribose 1-diphosphate: step 1/9. Its function is as follows. Required for the first step of histidine biosynthesis. May allow the feedback regulation of ATP phosphoribosyltransferase activity by histidine. The protein is ATP phosphoribosyltransferase regulatory subunit of Acidovorax ebreus (strain TPSY) (Diaphorobacter sp. (strain TPSY)).